A 66-amino-acid polypeptide reads, in one-letter code: Panusin (66 aa).

An N-terminal signal peptide occupies residues 1 to 22 (MKTKAVLMLMLLVLVAATLVQG). Residues 23-26 (EPEP) constitute a propeptide that is removed on maturation. Intrachain disulfides connect Cys-32/Cys-54, Cys-39/Cys-61, and Cys-44/Cys-60. Tyr-65 carries the tyrosine amide modification.

Forms dimers and higher-order oligomers. Post-translationally, contains 3 disulfide bonds.

Functionally, antimicrobial peptide. Has antibacterial activity against Gram-positive bacteria S.aureus ATCC 29737 and B.subtilis ATCC 6633 as well as against Gram-negative bacteria E.coli ATCC 10536 and K.pneumoniae ATCC 10031. The chain is Panusin from Panulirus argus (Caribbean spiny lobster).